Consider the following 226-residue polypeptide: Phosphoribosylformylglycinamidine synthase subunit PurQ (226 aa).

In terms of domain architecture, Glutamine amidotransferase type-1 spans 2–226 (KIAVVVFPGS…LENGRIKVEA (225 aa)). The active-site Nucleophile is cysteine 86. Catalysis depends on residues histidine 195 and glutamate 197.

As to quaternary structure, part of the FGAM synthase complex composed of 1 PurL, 1 PurQ and 2 PurS subunits.

It localises to the cytoplasm. It catalyses the reaction N(2)-formyl-N(1)-(5-phospho-beta-D-ribosyl)glycinamide + L-glutamine + ATP + H2O = 2-formamido-N(1)-(5-O-phospho-beta-D-ribosyl)acetamidine + L-glutamate + ADP + phosphate + H(+). The enzyme catalyses L-glutamine + H2O = L-glutamate + NH4(+). The protein operates within purine metabolism; IMP biosynthesis via de novo pathway; 5-amino-1-(5-phospho-D-ribosyl)imidazole from N(2)-formyl-N(1)-(5-phospho-D-ribosyl)glycinamide: step 1/2. Functionally, part of the phosphoribosylformylglycinamidine synthase complex involved in the purines biosynthetic pathway. Catalyzes the ATP-dependent conversion of formylglycinamide ribonucleotide (FGAR) and glutamine to yield formylglycinamidine ribonucleotide (FGAM) and glutamate. The FGAM synthase complex is composed of three subunits. PurQ produces an ammonia molecule by converting glutamine to glutamate. PurL transfers the ammonia molecule to FGAR to form FGAM in an ATP-dependent manner. PurS interacts with PurQ and PurL and is thought to assist in the transfer of the ammonia molecule from PurQ to PurL. This Limosilactobacillus reuteri (strain DSM 20016) (Lactobacillus reuteri) protein is Phosphoribosylformylglycinamidine synthase subunit PurQ.